The primary structure comprises 99 residues: Nucleoid-associated protein EbfC (99 aa).

The protein belongs to the YbaB/EbfC family. In terms of assembly, homodimer. Can form tetramers and octamers in solution.

The protein resides in the cytoplasm. The protein localises to the nucleoid. Its function is as follows. Binds to DNA and alters its conformation. May be involved in global regulation of gene expression. Binds specifically and non-specifically to DNA, preferentially to the 4 bp broken palindrome 5'-GTnAC-3'. Affects expression of a wide variety of genes, encoding both structural and metabolic proteins. This is Nucleoid-associated protein EbfC from Borreliella burgdorferi (strain ATCC 35210 / DSM 4680 / CIP 102532 / B31) (Borrelia burgdorferi).